The sequence spans 406 residues: Plasma serine protease inhibitor (406 aa).

A signal peptide spans 1–19; the sequence is MQLFLLLCLVLLSPQGASL. Positions 20–25 are cleaved as a propeptide — removed in mature form; sequence HRHHPR. Thr39 carries an O-linked (GalNAc...) threonine glycan. Asn249, Asn262, and Asn338 each carry an N-linked (GlcNAc...) asparagine glycan.

The protein belongs to the serpin family. Forms protease inhibiting heterodimers in extracellular body fluids with serine proteases such as activated protein C/coagulation factor V/F5, acrosin/ACR, chymotrypsinogen B/CTRB1, prothrombin/F2, factor Xa/F10, factor XI/F11, kallikrein/KLKB1, tissue kallikrein, trypsin/PRSS1, prostate specific antigen/KLK3, tissue plasminogen activator/PLAT and urinary plasminogen activator/PLAU. Forms membrane-anchored serine proteases inhibiting heterodimers with TMPRSS7 and TMPRSS11E. Interacts with SEMG2. Post-translationally, N- and O-glycosylated. N-glycosylation consists of a mixture of sialylated bi- (including sialyl-Lewis X epitopes), tri- and tetra-antennary complex-type chains; affects the maximal heparin- and thrombomodulin-enhanced rates of thrombin inhibition. O-glycosylated with core 1 or possibly core 8 glycans. Further modified with 2 sialic acid residues. In terms of processing, proteolytically cleaved. Inhibition of proteases is accompanied by formation of a stable enzyme-inhibitor complex and by degradation of the serpin to lower molecular weight derivatives. Proteolytically cleaved at the N-terminus; inhibits slightly the heparin- and thrombomodulin-enhanced rates of thrombin inhibition. In terms of tissue distribution, predominantly expressed in the epithelium of seminal vesicles. Expressed in the proximal tubular epithelium of the kidney. Expressed in the superficial and more differentiated epidermal keratinocytes of the skin. Expressed in megakaryocytes and platelets. Expressed poorly in kidney tumor cells compared to non tumor kidney tissues. Expressed in spermatozoa. Present in very high concentration in seminal plasma. Present in high concentration in plasma, synovial and Graaf follicle fluids. Present in low concentration in breast milk and in amniotic fluids. Present in very low concentration in urine, cerebrospinal fluids, saliva and tears (at protein level). Strongly expressed in liver. Expressed in kidney, spleen, pancreas, skeletal muscle, heart, testes, ovary, interstitial Leydig cells, epididymal glands, seminal vesicles and prostate.

It is found in the secreted. The protein localises to the extracellular space. Its activity is regulated as follows. Its inhibitory activity is greatly enhanced in the presence of glycosaminoglycans, heparin, thrombomodulin and phospholipids vesicles. Heparin-dependent serine protease inhibitor acting in body fluids and secretions. Inactivates serine proteases by binding irreversibly to their serine activation site. Involved in the regulation of intravascular and extravascular proteolytic activities. Plays hemostatic roles in the blood plasma. Acts as a procoagulant and pro-inflammatory factor by inhibiting the anticoagulant activated protein C factor as well as the generation of activated protein C factor by the thrombin/thrombomodulin complex. Acts as an anticoagulant factor by inhibiting blood coagulation factors like prothrombin, factor XI, factor Xa, plasma kallikrein and fibrinolytic enzymes such as tissue- and urinary-type plasminogen activators. In seminal plasma, inactivates several serine proteases implicated in the reproductive system. Inhibits the serpin acrosin; indirectly protects component of the male genital tract from being degraded by excessive released acrosin. Inhibits tissue- and urinary-type plasminogen activator, prostate-specific antigen and kallikrein activities; has a control on the sperm motility and fertilization. Inhibits the activated protein C-catalyzed degradation of SEMG1 and SEMG2; regulates the degradation of semenogelin during the process of transfer of spermatozoa from the male reproductive tract into the female tract. In urine, inhibits urinary-type plasminogen activator and kallikrein activities. Inactivates membrane-anchored serine proteases activities such as MPRSS7 and TMPRSS11E. Inhibits urinary-type plasminogen activator-dependent tumor cell invasion and metastasis. May also play a non-inhibitory role in seminal plasma and urine as a hydrophobic hormone carrier by its binding to retinoic acid. This Homo sapiens (Human) protein is Plasma serine protease inhibitor (SERPINA5).